A 127-amino-acid polypeptide reads, in one-letter code: DNA-directed RNA polymerase subunit omega (127 aa).

Belongs to the RNA polymerase subunit omega family. In terms of assembly, the RNAP catalytic core consists of 2 alpha, 1 beta, 1 beta' and 1 omega subunit. When a sigma factor is associated with the core the holoenzyme is formed, which can initiate transcription.

The enzyme catalyses RNA(n) + a ribonucleoside 5'-triphosphate = RNA(n+1) + diphosphate. In terms of biological role, promotes RNA polymerase assembly. Latches the N- and C-terminal regions of the beta' subunit thereby facilitating its interaction with the beta and alpha subunits. This is DNA-directed RNA polymerase subunit omega from Rickettsia typhi (strain ATCC VR-144 / Wilmington).